Here is a 223-residue protein sequence, read N- to C-terminus: ATP synthase subunit a 2 (223 aa).

The next 5 helical transmembrane spans lie at 17–37 (VAIT…ALVC), 77–97 (FLPL…SGVL), 106–126 (KIET…YFGV), 173–193 (FIIG…LMAL), and 195–215 (ILVG…FIGA).

Belongs to the ATPase A chain family. F-type ATPases have 2 components, CF(1) - the catalytic core - and CF(0) - the membrane proton channel. CF(1) has five subunits: alpha(3), beta(3), gamma(1), delta(1), epsilon(1). CF(0) has four main subunits: a, b, b' and c.

The protein localises to the cell inner membrane. Its function is as follows. Key component of the proton channel; it plays a direct role in the translocation of protons across the membrane. In Bradyrhizobium sp. (strain BTAi1 / ATCC BAA-1182), this protein is ATP synthase subunit a 2.